A 209-amino-acid polypeptide reads, in one-letter code: Uracil phosphoribosyltransferase (209 aa).

5-phospho-alpha-D-ribose 1-diphosphate contacts are provided by residues arginine 78, arginine 103, and 130-138 (DPMFATGGT). Uracil is bound by residues isoleucine 193 and 198-200 (GDA). Aspartate 199 is a 5-phospho-alpha-D-ribose 1-diphosphate binding site.

It belongs to the UPRTase family. Requires Mg(2+) as cofactor.

The enzyme catalyses UMP + diphosphate = 5-phospho-alpha-D-ribose 1-diphosphate + uracil. The protein operates within pyrimidine metabolism; UMP biosynthesis via salvage pathway; UMP from uracil: step 1/1. Its activity is regulated as follows. Allosterically activated by GTP. Its function is as follows. Catalyzes the conversion of uracil and 5-phospho-alpha-D-ribose 1-diphosphate (PRPP) to UMP and diphosphate. In Campylobacter fetus subsp. fetus (strain 82-40), this protein is Uracil phosphoribosyltransferase.